A 376-amino-acid chain; its full sequence is CCA-adding enzyme (376 aa).

The ATP site is built by Gly-23 and Arg-26. CTP contacts are provided by Gly-23 and Arg-26. 2 residues coordinate Mg(2+): Glu-36 and Asp-38. ATP contacts are provided by Arg-106, Arg-152, and Arg-155. The CTP site is built by Arg-106, Arg-152, and Arg-155.

Belongs to the tRNA nucleotidyltransferase/poly(A) polymerase family. Bacterial CCA-adding enzyme type 2 subfamily. The cofactor is Mg(2+).

It carries out the reaction a tRNA precursor + 2 CTP + ATP = a tRNA with a 3' CCA end + 3 diphosphate. The catalysed reaction is a tRNA with a 3' CCA end + 2 CTP + ATP = a tRNA with a 3' CCACCA end + 3 diphosphate. Catalyzes the addition and repair of the essential 3'-terminal CCA sequence in tRNAs without using a nucleic acid template. Adds these three nucleotides in the order of C, C, and A to the tRNA nucleotide-73, using CTP and ATP as substrates and producing inorganic pyrophosphate. tRNA 3'-terminal CCA addition is required both for tRNA processing and repair. Also involved in tRNA surveillance by mediating tandem CCA addition to generate a CCACCA at the 3' terminus of unstable tRNAs. While stable tRNAs receive only 3'-terminal CCA, unstable tRNAs are marked with CCACCA and rapidly degraded. The sequence is that of CCA-adding enzyme from Coxiella burnetii (strain RSA 331 / Henzerling II).